We begin with the raw amino-acid sequence, 114 residues long: UPF0145 protein TT_C1581 (114 aa).

It belongs to the UPF0145 family.

This is UPF0145 protein TT_C1581 from Thermus thermophilus (strain ATCC BAA-163 / DSM 7039 / HB27).